The sequence spans 256 residues: MAVGKNKRLSKGKKGLKKKVVDPFTRKDWFDIKAPSTFENRNVGKTLINRSTGLKNAADGLKGRVVEVSLADLQGSEDHSYRKIKLRVDEVQGKNLLTNFHGLDFTSDKLRSLVRKWQSLVEANVTVKTSDDYVLRVFAIAFTKRQANQIKKTTYAQSSKLREVRKKMIEIMQREVSNVTLAQLTSKLIPEVIGREIEKSTQTIFPLQNVHIRKVKLLKQPKFDLGALLALHGEGSTEEKGKKVNAGFKDVVLESV.

Residue A2 is modified to N-acetylalanine; partial.

The protein belongs to the eukaryotic ribosomal protein eS1 family. As to quaternary structure, component of the small ribosomal subunit. Mature ribosomes consist of a small (40S) and a large (60S) subunit. The 40S subunit contains about 33 different proteins and 1 molecule of RNA (18S). The 60S subunit contains about 49 different proteins and 3 molecules of RNA (25S, 5.8S and 5S).

It is found in the cytoplasm. The chain is Small ribosomal subunit protein eS1B from Scheffersomyces stipitis (strain ATCC 58785 / CBS 6054 / NBRC 10063 / NRRL Y-11545) (Yeast).